A 212-amino-acid polypeptide reads, in one-letter code: Putative aryl-alcohol dehydrogenase AAD6 (212 aa).

Tyr-76 (proton donor) is an active-site residue.

Belongs to the aldo/keto reductase family. Aldo/keto reductase 2 subfamily.

This Saccharomyces cerevisiae (strain ATCC 204508 / S288c) (Baker's yeast) protein is Putative aryl-alcohol dehydrogenase AAD6.